A 398-amino-acid chain; its full sequence is Bone morphogenetic protein 2-A (398 aa).

Positions 1–23 (MVAGIHSLLLLLFYQVLLSGCTG) are cleaved as a signal peptide. A propeptide spanning residues 24 to 284 (LIPEEGKRKY…GHALHKRQKR (261 aa)) is cleaved from the precursor. N-linked (GlcNAc...) asparagine glycosylation is found at asparagine 137, asparagine 202, and asparagine 340. Intrachain disulfides connect cysteine 298–cysteine 363, cysteine 327–cysteine 395, and cysteine 331–cysteine 397.

The protein belongs to the TGF-beta family. In terms of assembly, homodimer; disulfide-linked.

The protein resides in the secreted. Its function is as follows. Induces cartilage and bone formation. The sequence is that of Bone morphogenetic protein 2-A (bmp2-a) from Xenopus laevis (African clawed frog).